Here is a 1060-residue protein sequence, read N- to C-terminus: Carbamoyl phosphate synthase large chain (1060 aa).

The tract at residues 1 to 401 (MPKRTDIRKI…SLLKACRSLE (401 aa)) is carboxyphosphate synthetic domain. 12 residues coordinate ATP: arginine 129, arginine 169, glycine 175, glycine 176, arginine 208, isoleucine 210, glutamate 215, glycine 241, isoleucine 242, histidine 243, glutamine 284, and glutamate 298. The ATP-grasp 1 domain maps to 133 to 327 (KQLMEELNQP…IAKLAAKIAV (195 aa)). 3 residues coordinate Mg(2+): glutamine 284, glutamate 298, and asparagine 300. Residues glutamine 284, glutamate 298, and asparagine 300 each coordinate Mn(2+). An oligomerization domain region spans residues 402 to 546 (IGVDHIKIAD…YSTYAVENES (145 aa)). A carbamoyl phosphate synthetic domain region spans residues 547–929 (LISDKASILV…ALYKAFEAAY (383 aa)). One can recognise an ATP-grasp 2 domain in the interval 671–861 (EATLQALNIP…MAQVATKVIL (191 aa)). ATP is bound by residues arginine 707, alanine 746, leucine 748, glutamate 752, glycine 777, valine 778, histidine 779, serine 780, glutamine 820, and glutamate 832. Mg(2+)-binding residues include glutamine 820, glutamate 832, and asparagine 834. The Mn(2+) site is built by glutamine 820, glutamate 832, and asparagine 834. Positions 930–1060 (LHMPDYGNIV…SRAFTLKVLD (131 aa)) constitute an MGS-like domain. The allosteric domain stretch occupies residues 930–1060 (LHMPDYGNIV…SRAFTLKVLD (131 aa)).

This sequence belongs to the CarB family. Composed of two chains; the small (or glutamine) chain promotes the hydrolysis of glutamine to ammonia, which is used by the large (or ammonia) chain to synthesize carbamoyl phosphate. Tetramer of heterodimers (alpha,beta)4. Mg(2+) serves as cofactor. Requires Mn(2+) as cofactor.

It carries out the reaction hydrogencarbonate + L-glutamine + 2 ATP + H2O = carbamoyl phosphate + L-glutamate + 2 ADP + phosphate + 2 H(+). It catalyses the reaction hydrogencarbonate + NH4(+) + 2 ATP = carbamoyl phosphate + 2 ADP + phosphate + 2 H(+). The protein operates within amino-acid biosynthesis; L-arginine biosynthesis; carbamoyl phosphate from bicarbonate: step 1/1. It participates in pyrimidine metabolism; UMP biosynthesis via de novo pathway; (S)-dihydroorotate from bicarbonate: step 1/3. In terms of biological role, large subunit of the glutamine-dependent carbamoyl phosphate synthetase (CPSase). CPSase catalyzes the formation of carbamoyl phosphate from the ammonia moiety of glutamine, carbonate, and phosphate donated by ATP, constituting the first step of 2 biosynthetic pathways, one leading to arginine and/or urea and the other to pyrimidine nucleotides. The large subunit (synthetase) binds the substrates ammonia (free or transferred from glutamine from the small subunit), hydrogencarbonate and ATP and carries out an ATP-coupled ligase reaction, activating hydrogencarbonate by forming carboxy phosphate which reacts with ammonia to form carbamoyl phosphate. In Streptococcus agalactiae serotype III (strain NEM316), this protein is Carbamoyl phosphate synthase large chain.